Here is a 200-residue protein sequence, read N- to C-terminus: MDKTQPHPLFKLATELGPLIVFFVVNAKFNLFAATGAFMVAIVAAMIASYVVTKHVPLMAIVTGIVVLVFGTLTLVLHDETFIKLKPTIIYGLFAAVLGGGLLFNRSFIAIMFDQMFNLTPAGWRILTFRWALFFAAMAVLNEIIWRTQSTDFWVGFKAFGVVPLTMIFAIAQMPLIKRYHQDPASLEASDAAEGDVSKG.

6 helical membrane passes run 7-27 (HPLF…VVNA), 32-52 (FAAT…SYVV), 56-76 (VPLM…LTLV), 93-113 (LFAA…AIMF), 126-146 (ILTF…EIIW), and 153-173 (FWVG…AIAQ).

The protein belongs to the YciB family.

The protein resides in the cell inner membrane. Plays a role in cell envelope biogenesis, maintenance of cell envelope integrity and membrane homeostasis. This chain is Inner membrane-spanning protein YciB, found in Bradyrhizobium sp. (strain BTAi1 / ATCC BAA-1182).